The chain runs to 452 residues: CASP-like protein 4A1 (452 aa).

The segment covering 1–17 (MGLRDSLKEREDRRSSE) has biased composition (basic and acidic residues). Disordered stretches follow at residues 1–39 (MGLR…RKES), 71–147 (RAGP…ARSS), and 164–283 (AKYV…VQFR). Topologically, residues 1–305 (MGLRDSLKER…KRRAAAMQRT (305 aa)) are cytoplasmic. A compositionally biased stretch (polar residues) spans 25-34 (SWMTRESTTG). 2 stretches are compositionally biased toward low complexity: residues 105–126 (QAQA…TGSG) and 190–205 (GWYS…AAPP). Pro residues predominate over residues 211-272 (DPPPAPPRRQ…TAPAPAPVPA (62 aa)). The chain crosses the membrane as a helical span at residues 306 to 326 (ALLARGAAAGLCLAALAVLAA). The Extracellular segment spans residues 327–347 (DTRKGWARDSYSNYTQFRYSE). N-linked (GlcNAc...) asparagine glycosylation occurs at asparagine 339. Residues 348 to 368 (AVNVIGFIYSVFQFVALVELM) form a helical membrane-spanning segment. At 369–389 (RRNKHLIPHPKRDLFDFTMDQ) the chain is on the cytoplasmic side. A helical membrane pass occupies residues 390-406 (VLTYLLISSSSSATARV). Residues 407–423 (SDLIDNWGSDPFPSMAN) lie on the Extracellular side of the membrane. N-linked (GlcNAc...) asparagine glycosylation is present at asparagine 423. A helical transmembrane segment spans residues 424–444 (GSIAISFLAFAVFAICSLISA). Residues 445–452 (YNLFRRDV) lie on the Cytoplasmic side of the membrane.

Belongs to the Casparian strip membrane proteins (CASP) family. Homodimer and heterodimers.

The protein resides in the cell membrane. The protein is CASP-like protein 4A1 of Sorghum bicolor (Sorghum).